The chain runs to 111 residues: Cytochrome c6-like (111 aa).

An N-terminal signal peptide occupies residues 1 to 25; the sequence is MQKFLKLVLVTFLFLISTLTPPANA. Cysteine 39, cysteine 42, histidine 43, and methionine 83 together coordinate heme c.

This sequence belongs to the cytochrome c family. PetJ subfamily. In terms of processing, binds 1 heme c group covalently per subunit.

The protein resides in the cellular thylakoid lumen. This is Cytochrome c6-like from Nostoc sp. (strain PCC 7120 / SAG 25.82 / UTEX 2576).